The chain runs to 520 residues: Ribonuclease Y (520 aa).

A helical transmembrane segment spans residues 4 to 24 (TVWILISILLATVGAVVGFFV). The segment at 86 to 116 (KQENRLMQKEENLDRKDETLDKREQQLEKKE) is disordered. One can recognise a KH domain in the interval 210 to 273 (TVSVVNLPND…ETARIALDKL (64 aa)). Residues 336–429 (VLKHSMEVAY…VAAADALSAA (94 aa)) form the HD domain.

It belongs to the RNase Y family.

It is found in the cell membrane. Its function is as follows. Endoribonuclease that initiates mRNA decay. In Bacillus cereus (strain ATCC 10987 / NRS 248), this protein is Ribonuclease Y.